Reading from the N-terminus, the 367-residue chain is Glutamate 5-kinase (367 aa).

Lys10 is a binding site for ATP. Substrate contacts are provided by Ser50, Asp137, and Asn149. ATP is bound by residues 169–170 and 211–217; these read TD and TGGMSTK. Residues 275-353 form the PUA domain; sequence AGIITIDAGA…QDIEQVLGYE (79 aa).

Belongs to the glutamate 5-kinase family.

The protein localises to the cytoplasm. The catalysed reaction is L-glutamate + ATP = L-glutamyl 5-phosphate + ADP. It functions in the pathway amino-acid biosynthesis; L-proline biosynthesis; L-glutamate 5-semialdehyde from L-glutamate: step 1/2. Functionally, catalyzes the transfer of a phosphate group to glutamate to form L-glutamate 5-phosphate. In Pasteurella multocida (strain Pm70), this protein is Glutamate 5-kinase.